The sequence spans 516 residues: BAR/IMD domain-containing adapter protein 2-like 1 (516 aa).

Residues 1 to 249 enclose the IMD domain; that stretch reads MSRGPEEVNR…MNMIEEIKTP (249 aa). The stretch at 115 to 148 forms a coiled coil; that stretch reads MNATLKRYQAEHRNKLDSLEKSQAELKKIRRKSQ. Residues Thr248 and Thr257 each carry the phosphothreonine modification. Residues Ser261 and Ser281 each carry the phosphoserine modification. Positions 303–328 are disordered; sequence NPATAGQSAEKTNNSTANTGDDPSLQ. Ser332 bears the Phosphoserine mark. An SH3 domain is found at 340-403; the sequence is MKKQKVKTIF…PSSYTKLLEE (64 aa). Position 413 is a phosphothreonine (Thr413). Residues Ser415, Ser421, and Ser423 each carry the phosphoserine modification. Residues 454–516 are disordered; that stretch reads ADAAKIPSTS…TNDRSAPIIR (63 aa). The segment covering 474–485 has biased composition (polar residues); the sequence is ATSTSPSDSNGT. Residues 488 to 516 form a binds F-actin region; the sequence is PPFLSGENPFATVKLRPTVTNDRSAPIIR.

As to quaternary structure, interacts with RAC1. Binds to F-actin. Interacts with FASLG. Phosphorylated on tyrosine in response to insulin.

It is found in the cytoplasm. The protein resides in the cytoskeleton. In terms of biological role, may function as adapter protein. Involved in the formation of clusters of actin bundles. Plays a role in the reorganization of the actin cytoskeleton in response to bacterial infection. The polypeptide is BAR/IMD domain-containing adapter protein 2-like 1 (Baiap2l1) (Rattus norvegicus (Rat)).